Consider the following 128-residue polypeptide: Small ribosomal subunit protein uS11 (128 aa).

The protein belongs to the universal ribosomal protein uS11 family. In terms of assembly, part of the 30S ribosomal subunit. Interacts with proteins S7 and S18. Binds to IF-3.

Its function is as follows. Located on the platform of the 30S subunit, it bridges several disparate RNA helices of the 16S rRNA. Forms part of the Shine-Dalgarno cleft in the 70S ribosome. The sequence is that of Small ribosomal subunit protein uS11 from Chromohalobacter salexigens (strain ATCC BAA-138 / DSM 3043 / CIP 106854 / NCIMB 13768 / 1H11).